A 30-amino-acid chain; its full sequence is Photosystem I reaction center subunit XII (30 aa).

Residues 7–29 form a helical membrane-spanning segment; sequence VYIALMAALLASVLAIRLGATLY.

It belongs to the PsaM family.

The protein resides in the plastid. It is found in the chloroplast thylakoid membrane. This chain is Photosystem I reaction center subunit XII, found in Thalassiosira pseudonana (Marine diatom).